Here is a 257-residue protein sequence, read N- to C-terminus: MTSLLEIKDLTAFYGPLRAIKDVSLSIQEGSVTALIGPSGCGKSTLLRTLNRMHELSPGAKVKGQVLLDGRDLYQLDPVYVRQEVGMIFQRPNPFPTMSIRENVLAGIKLNRKRIHRIQQNELMERCLRSVNLWDEVHNRLGRPGGELSGGQQQRLCIARAIAVSPRVILMDEPCSALDPVSTKAIEQLICKLKEKHTIVIVTHNMQQASRVSDWTAVFNVARSGGSGELVEHDKTEVIFTSPKNEVTLNYISGKFG.

In terms of domain architecture, ABC transporter spans 5–246 (LEIKDLTAFY…EVIFTSPKNE (242 aa)). Position 37–44 (37–44 (GPSGCGKS)) interacts with ATP.

The protein belongs to the ABC transporter superfamily. Phosphate importer (TC 3.A.1.7) family. In terms of assembly, the complex is composed of two ATP-binding proteins (PstB), two transmembrane proteins (PstC and PstA) and a solute-binding protein (PstS).

The protein localises to the cell membrane. It carries out the reaction phosphate(out) + ATP + H2O = ADP + 2 phosphate(in) + H(+). Its function is as follows. Part of the ABC transporter complex PstSACB involved in phosphate import. Responsible for energy coupling to the transport system. The chain is Phosphate import ATP-binding protein PstB from Tropheryma whipplei (strain Twist) (Whipple's bacillus).